We begin with the raw amino-acid sequence, 876 residues long: MEMKPKYDPREVEAGRYEEWVKNGYFKPSEDKSKETYTIVIPPPNVTGKLHLGHAWDTTLQDIITRMKRMQGYDTLYLPGMDHAGIATQAKVEAKLNEQGITRYDLGREKFLEQAWDWKEEYASFIRAQWAKLGLGLDYSRERFTLDEGLSKAVKKVFVDLYNKGIIYRGERIINWDPKARTALSDIEVIHEDVQGAFYHFKYPYADVEGFIEIATTRPETMLGDTAIVVNPNDERYKDVIGKTVILPIVGRELPILADEYVDIDFGSGAMKVTPAHDPNDFEIGQRHQLENIIVMDENGKMNNKAGKYEGMDRFDCRKQLVEDLKEQDLVIKIEDHVHSVGHSERSGAVVEPYLSTQWFVRMEDLAKRSLDNQKTDDRIDFYPQRFEHTFNQWMENIRDWTISRQLWWGHQIPAWYHKETGEIYVGEEAPTDIENWQQDEDVLDTWFSSALWPFSTLGWPDLESEDFKRYYPTNALVTGYDIIFFWVARMIFQGLEFTDRRPFNDVLLHGLVRAEDGRKMSKSLGNGVDPMDVIDEYGADSLRYFLATGSSPGHDLRYSTEKVESVWNFINKIWNGARFSLMNIGEDFKVEDIDLSGNLSLADKWILTRLNETIATVTDLSDKYEFGEVGRALYNFIWDDFCDWYIEMSKIPMNGNDEEQKQVTRSVLSYTLDNIMRMLHPFMPFVTEKIWQSLPHEGETIVKASWPEVRESLIFEESKQTMQQLVEIIKSVRQSRVEVNTPLSKEIPILIQAKDKEIETTLSQNKDYLIKFCNPSTLNISTDVEIPEKAMTSVVIAGKVVLPLEGLIDMDKEISRLEKELAKLQSELDRVDKKLSNENFVSKAPEKVINEEKRKKQDYQEKYDGVKARIEQLKA.

A 'HIGH' region motif is present at residues 44–54; sequence PNVTGKLHLGH. Residues 520 to 524 carry the 'KMSKS' region motif; the sequence is KMSKS. ATP is bound at residue K523. Residues 805-876 adopt a coiled-coil conformation; it reads LEGLIDMDKE…VKARIEQLKA (72 aa).

Belongs to the class-I aminoacyl-tRNA synthetase family. ValS type 1 subfamily. As to quaternary structure, monomer.

Its subcellular location is the cytoplasm. The enzyme catalyses tRNA(Val) + L-valine + ATP = L-valyl-tRNA(Val) + AMP + diphosphate. In terms of biological role, catalyzes the attachment of valine to tRNA(Val). As ValRS can inadvertently accommodate and process structurally similar amino acids such as threonine, to avoid such errors, it has a 'posttransfer' editing activity that hydrolyzes mischarged Thr-tRNA(Val) in a tRNA-dependent manner. This Staphylococcus aureus (strain MRSA252) protein is Valine--tRNA ligase.